The chain runs to 312 residues: Glycerol-3-phosphate phosphatase (312 aa).

Aspartate 30 serves as the catalytic Nucleophile. Residues aspartate 30, aspartate 32, and aspartate 251 each coordinate Mg(2+). Catalysis depends on aspartate 32, which acts as the Proton donor.

Belongs to the HAD-like hydrolase superfamily. CbbY/CbbZ/Gph/YieH family. Homodimer. The cofactor is Mg(2+).

The enzyme catalyses O-phospho-L-tyrosyl-[protein] + H2O = L-tyrosyl-[protein] + phosphate. It catalyses the reaction sn-glycerol 1-phosphate + H2O = glycerol + phosphate. It carries out the reaction sn-glycerol 3-phosphate + H2O = glycerol + phosphate. In terms of biological role, glycerol-3-phosphate phosphatase hydrolyzing glycerol-3-phosphate into glycerol. Thereby, regulates the cellular levels of glycerol-3-phosphate a metabolic intermediate of glucose, lipid and energy metabolism. Was also shown to have a 2-phosphoglycolate phosphatase activity and a tyrosine-protein phosphatase activity. However, their physiological relevance is unclear. In vitro, also has a phosphatase activity toward ADP, ATP, GDP and GTP. This Gallus gallus (Chicken) protein is Glycerol-3-phosphate phosphatase.